We begin with the raw amino-acid sequence, 394 residues long: Elongation factor Tu (394 aa).

In terms of domain architecture, tr-type G spans 10 to 204 (KPHVNIGTIG…AVDSYIPQPV (195 aa)). Residues 19–26 (GHVDHGKT) form a G1 region. 19–26 (GHVDHGKT) serves as a coordination point for GTP. T26 is a Mg(2+) binding site. Positions 60–64 (GITIS) are G2. The G3 stretch occupies residues 81 to 84 (DCPG). GTP-binding positions include 81–85 (DCPGH) and 136–139 (NKVD). Positions 136 to 139 (NKVD) are G4. The interval 174 to 176 (SAL) is G5.

This sequence belongs to the TRAFAC class translation factor GTPase superfamily. Classic translation factor GTPase family. EF-Tu/EF-1A subfamily. In terms of assembly, monomer.

The protein resides in the cytoplasm. The enzyme catalyses GTP + H2O = GDP + phosphate + H(+). In terms of biological role, GTP hydrolase that promotes the GTP-dependent binding of aminoacyl-tRNA to the A-site of ribosomes during protein biosynthesis. The sequence is that of Elongation factor Tu from Rickettsia canadensis (strain McKiel).